The primary structure comprises 89 residues: Small ribosomal subunit protein uS15 (89 aa).

This sequence belongs to the universal ribosomal protein uS15 family. As to quaternary structure, part of the 30S ribosomal subunit. Forms a bridge to the 50S subunit in the 70S ribosome, contacting the 23S rRNA.

One of the primary rRNA binding proteins, it binds directly to 16S rRNA where it helps nucleate assembly of the platform of the 30S subunit by binding and bridging several RNA helices of the 16S rRNA. Functionally, forms an intersubunit bridge (bridge B4) with the 23S rRNA of the 50S subunit in the ribosome. The sequence is that of Small ribosomal subunit protein uS15 from Desulfatibacillum aliphaticivorans.